The primary structure comprises 289 residues: Pantothenate synthetase (289 aa).

30–37 (MGYLHKGH) provides a ligand contact to ATP. Residue His-37 is the Proton donor of the active site. (R)-pantoate is bound at residue Gln-61. A beta-alanine-binding site is contributed by Gln-61. 147-150 (GEKD) contributes to the ATP binding site. Gln-153 is a binding site for (R)-pantoate. Residues Val-176 and 184–187 (CSSR) contribute to the ATP site.

It belongs to the pantothenate synthetase family. Homodimer.

The protein resides in the cytoplasm. The catalysed reaction is (R)-pantoate + beta-alanine + ATP = (R)-pantothenate + AMP + diphosphate + H(+). The protein operates within cofactor biosynthesis; (R)-pantothenate biosynthesis; (R)-pantothenate from (R)-pantoate and beta-alanine: step 1/1. Functionally, catalyzes the condensation of pantoate with beta-alanine in an ATP-dependent reaction via a pantoyl-adenylate intermediate. The polypeptide is Pantothenate synthetase (Allorhizobium ampelinum (strain ATCC BAA-846 / DSM 112012 / S4) (Agrobacterium vitis (strain S4))).